Consider the following 424-residue polypeptide: Calreticulin-2 (424 aa).

A signal peptide spans 1–22 (MAKMIPSLVSLILIGLVAIASA). An N-linked (GlcNAc...) asparagine glycan is attached at asparagine 59. Cysteines 108 and 140 form a disulfide. Residues tyrosine 112, lysine 114, tyrosine 131, and aspartate 138 each coordinate an alpha-D-glucoside. Repeat copies occupy residues 194–205 (KQTGSLYSDWDL), 213–224 (DPSAKKPEDWDE), 230–241 (DPEDKKPDGYDD), 248–259 (DTDSKKPEDWDD), 263–273 (GEWTAPTIPNP), 277–287 (GEWKPKQIKNP), and 291–301 (GKWEAPLIDNP). The 4 X approximate repeats stretch occupies residues 194 to 259 (KQTGSLYSDW…DSKKPEDWDD (66 aa)). The span at 210-220 (KIKDPSAKKPE) shows a compositional bias: basic and acidic residues. A disordered region spans residues 210–279 (KIKDPSAKKP…IPNPEYMGEW (70 aa)). The span at 221-230 (DWDEQEYISD) shows a compositional bias: acidic residues. Residues 231-255 (PEDKKPDGYDDIPKEIPDTDSKKPE) show a composition bias toward basic and acidic residues. A 3 X approximate repeats region spans residues 263–301 (GEWTAPTIPNPEYMGEWKPKQIKNPNYKGKWEAPLIDNP). Glutamate 321 contacts an alpha-D-glucoside. Positions 362-378 (FDEAEKKNEEEESKDAP) are enriched in basic and acidic residues. The segment at 362–424 (FDEAEKKNEE…EKDATAHDEL (63 aa)) is disordered. Positions 379–397 (AESDAEDEPEDDEGGDDSD) are enriched in acidic residues. Phosphoserine is present on residues serine 381 and serine 396. Over residues 398–424 (SESKAEETKSVDSEETSEKDATAHDEL) the composition is skewed to basic and acidic residues. Residues 421-424 (HDEL) carry the Prevents secretion from ER motif.

The protein belongs to the calreticulin family.

It is found in the endoplasmic reticulum lumen. Molecular calcium-binding chaperone promoting folding, oligomeric assembly and quality control in the ER via the calreticulin/calnexin cycle. This lectin may interact transiently with almost all of the monoglucosylated glycoproteins that are synthesized in the ER. This Arabidopsis thaliana (Mouse-ear cress) protein is Calreticulin-2 (CRT2).